Here is a 617-residue protein sequence, read N- to C-terminus: Glutamyl-tRNA(Gln) amidotransferase subunit E (617 aa).

This sequence belongs to the GatB/GatE family. GatE subfamily. Heterodimer of GatD and GatE.

The catalysed reaction is L-glutamyl-tRNA(Gln) + L-glutamine + ATP + H2O = L-glutaminyl-tRNA(Gln) + L-glutamate + ADP + phosphate + H(+). Its function is as follows. Allows the formation of correctly charged Gln-tRNA(Gln) through the transamidation of misacylated Glu-tRNA(Gln) in organisms which lack glutaminyl-tRNA synthetase. The reaction takes place in the presence of glutamine and ATP through an activated gamma-phospho-Glu-tRNA(Gln). The GatDE system is specific for glutamate and does not act on aspartate. The polypeptide is Glutamyl-tRNA(Gln) amidotransferase subunit E (Natronomonas pharaonis (strain ATCC 35678 / DSM 2160 / CIP 103997 / JCM 8858 / NBRC 14720 / NCIMB 2260 / Gabara) (Halobacterium pharaonis)).